The sequence spans 45 residues: DNA-directed RNA polymerase subunit Rpo12 (45 aa).

Residues Cys-8, Cys-23, and Cys-26 each contribute to the Zn(2+) site.

It belongs to the archaeal Rpo12/eukaryotic RPC10 RNA polymerase subunit family. In terms of assembly, part of the RNA polymerase complex. Zn(2+) is required as a cofactor.

The protein localises to the cytoplasm. It catalyses the reaction RNA(n) + a ribonucleoside 5'-triphosphate = RNA(n+1) + diphosphate. In terms of biological role, DNA-dependent RNA polymerase (RNAP) catalyzes the transcription of DNA into RNA using the four ribonucleoside triphosphates as substrates. This is DNA-directed RNA polymerase subunit Rpo12 from Methanosarcina acetivorans (strain ATCC 35395 / DSM 2834 / JCM 12185 / C2A).